Reading from the N-terminus, the 560-residue chain is Trans-activating transcriptional regulatory protein (560 aa).

Residues 106 to 133 form a disordered region; the sequence is DSMKRKASELDSDSDSGESSKGKKRVIK.

Belongs to the nucleopolyhedrovirus IE-1 protein family.

Functionally, regulatory transcriptional protein, which trans-activates gene expression from early baculovirus promoters. Can also trans-activate its own promoter, suggesting that it is autoregulated during normal infection of insect cells. The polypeptide is Trans-activating transcriptional regulatory protein (IE1) (Choristoneura fumiferana nuclear polyhedrosis virus (CfMNPV)).